The sequence spans 396 residues: Anticodon nuclease (396 aa).

Functionally, anticodon endonuclease (ACNase) that triggers the cleavage ligation of tRNA(Lys). It is activated by T4 stp protein and masked by the prrD protein (the endonuclease subunit of EcoprrI). The prr locus restricts phage T4 mutants lacking polynucleotide kinase or RNA ligase; T4 mutants lacking these genes manifest a T4-induced anticodon nuclease (ACNase). It is thought that Stp and other T4-encoded ACNase factors counteract the masking agents, thus activating the latent ACNase. The polypeptide is Anticodon nuclease (Escherichia coli).